We begin with the raw amino-acid sequence, 352 residues long: Protein NDRG4 (352 aa).

Residues lysine 293, serine 298, serine 317, and serine 323 each carry the phosphoserine modification. The interval 301–352 is disordered; sequence AVPSASMTRLARSRTASLTSASSVDGSRPQPCAHSDSSEGMGQVNHTMEVSC. Low complexity predominate over residues 308–323; the sequence is TRLARSRTASLTSASS. The span at 338–352 shows a compositional bias: polar residues; that stretch reads SEGMGQVNHTMEVSC.

This sequence belongs to the NDRG family. In terms of tissue distribution, predominantly expressed in the brain (at protein level). Detected in neurons of various parts of brain, including the olfactory bulb, olfactory tuberculum, cerebral cortex, striatum, hippocampus, dentate gyrus, thalamus, hypothalamus, mesencephalon, cerebellum, pons and medulla oblongata.

The protein localises to the cytoplasm. It localises to the cytosol. Functionally, contributes to the maintenance of intracerebral BDNF levels within the normal range, which is necessary for the preservation of spatial learning and the resistance to neuronal cell death caused by ischemic stress. May enhance growth factor-induced ERK1 and ERK2 phosphorylation. May attenuate NGF-promoted ELK1 phosphorylation in a microtubule-dependent manner. The protein is Protein NDRG4 (Ndrg4) of Mus musculus (Mouse).